Reading from the N-terminus, the 122-residue chain is S-adenosylmethionine decarboxylase proenzyme (122 aa).

The active-site Schiff-base intermediate with substrate; via pyruvic acid is the S69. Pyruvic acid (Ser); by autocatalysis is present on S69. The active-site Proton acceptor; for processing activity is the H74. The active-site Proton donor; for catalytic activity is C89.

It belongs to the prokaryotic AdoMetDC family. Type 1 subfamily. In terms of assembly, heterotetramer of two alpha and two beta chains arranged as a dimer of alpha/beta heterodimers. The cofactor is pyruvate. In terms of processing, is synthesized initially as an inactive proenzyme. Formation of the active enzyme involves a self-maturation process in which the active site pyruvoyl group is generated from an internal serine residue via an autocatalytic post-translational modification. Two non-identical subunits are generated from the proenzyme in this reaction, and the pyruvate is formed at the N-terminus of the alpha chain, which is derived from the carboxyl end of the proenzyme. The post-translation cleavage follows an unusual pathway, termed non-hydrolytic serinolysis, in which the side chain hydroxyl group of the serine supplies its oxygen atom to form the C-terminus of the beta chain, while the remainder of the serine residue undergoes an oxidative deamination to produce ammonia and the pyruvoyl group blocking the N-terminus of the alpha chain.

It carries out the reaction S-adenosyl-L-methionine + H(+) = S-adenosyl 3-(methylsulfanyl)propylamine + CO2. It functions in the pathway amine and polyamine biosynthesis; S-adenosylmethioninamine biosynthesis; S-adenosylmethioninamine from S-adenosyl-L-methionine: step 1/1. In terms of biological role, catalyzes the decarboxylation of S-adenosylmethionine to S-adenosylmethioninamine (dcAdoMet), the propylamine donor required for the synthesis of the polyamines spermine and spermidine from the diamine putrescine. This chain is S-adenosylmethionine decarboxylase proenzyme, found in Sulfolobus acidocaldarius (strain ATCC 33909 / DSM 639 / JCM 8929 / NBRC 15157 / NCIMB 11770).